A 579-amino-acid chain; its full sequence is Arginine--tRNA ligase (579 aa).

Residues 123–133 (PNLAKEMHVGH) carry the 'HIGH' region motif.

The protein belongs to the class-I aminoacyl-tRNA synthetase family. Monomer.

Its subcellular location is the cytoplasm. The enzyme catalyses tRNA(Arg) + L-arginine + ATP = L-arginyl-tRNA(Arg) + AMP + diphosphate. This Cellvibrio japonicus (strain Ueda107) (Pseudomonas fluorescens subsp. cellulosa) protein is Arginine--tRNA ligase.